The primary structure comprises 481 residues: Dual specificity protein kinase CLK4 (481 aa).

2 disordered regions span residues 1–47 and 102–143; these read MRHS…KPHH and SKSS…EDDE. Residues 8-19 show a composition bias toward basic and acidic residues; that stretch reads HCPDWDSRESWG. 2 stretches are compositionally biased toward basic residues: residues 106–119 and 126–136; these read VRSRRSSPKRKRNR and SHSKSHRRKRS. S136 and S138 each carry phosphoserine. The Protein kinase domain occupies 159–475; the sequence is YEIVDTLGEG…LDEALQHPFF (317 aa). ATP contacts are provided by residues 165–173 and K189; that span reads LGEGAFGKV. D286 serves as the catalytic Proton acceptor.

This sequence belongs to the protein kinase superfamily. CMGC Ser/Thr protein kinase family. Lammer subfamily. In terms of assembly, interacts with UBL5. In terms of processing, autophosphorylates on all three types of residues. As to expression, expressed in the hippocampus, the cerebellum and the olfactory bulb.

The protein localises to the nucleus. It carries out the reaction L-seryl-[protein] + ATP = O-phospho-L-seryl-[protein] + ADP + H(+). It catalyses the reaction L-threonyl-[protein] + ATP = O-phospho-L-threonyl-[protein] + ADP + H(+). The enzyme catalyses L-tyrosyl-[protein] + ATP = O-phospho-L-tyrosyl-[protein] + ADP + H(+). Its activity is regulated as follows. TG003 inhibits its kinase activity and affects the regulation of alternative splicing mediated by phosphorylation of SR proteins. Its function is as follows. Dual specificity kinase acting on both serine/threonine and tyrosine-containing substrates. Phosphorylates serine- and arginine-rich (SR) proteins of the spliceosomal complex and may be a constituent of a network of regulatory mechanisms that enable SR proteins to control RNA splicing. Phosphorylates SRSF1 and SRSF3. Required for the regulation of alternative splicing of MAPT/TAU. Regulates the alternative splicing of tissue factor (F3) pre-mRNA in endothelial cells. This chain is Dual specificity protein kinase CLK4 (Clk4), found in Mus musculus (Mouse).